The primary structure comprises 101 residues: UPF0125 protein VC_0850 (101 aa).

Belongs to the UPF0125 (RnfH) family.

The protein is UPF0125 protein VC_0850 of Vibrio cholerae serotype O1 (strain ATCC 39315 / El Tor Inaba N16961).